A 377-amino-acid chain; its full sequence is Succinyl-diaminopimelate desuccinylase (377 aa).

A Zn(2+)-binding site is contributed by H68. D70 is a catalytic residue. D101 provides a ligand contact to Zn(2+). E135 acts as the Proton acceptor in catalysis. Residues E136, E164, and H350 each contribute to the Zn(2+) site.

It belongs to the peptidase M20A family. DapE subfamily. As to quaternary structure, homodimer. It depends on Zn(2+) as a cofactor. The cofactor is Co(2+).

It carries out the reaction N-succinyl-(2S,6S)-2,6-diaminopimelate + H2O = (2S,6S)-2,6-diaminopimelate + succinate. It functions in the pathway amino-acid biosynthesis; L-lysine biosynthesis via DAP pathway; LL-2,6-diaminopimelate from (S)-tetrahydrodipicolinate (succinylase route): step 3/3. In terms of biological role, catalyzes the hydrolysis of N-succinyl-L,L-diaminopimelic acid (SDAP), forming succinate and LL-2,6-diaminopimelate (DAP), an intermediate involved in the bacterial biosynthesis of lysine and meso-diaminopimelic acid, an essential component of bacterial cell walls. The protein is Succinyl-diaminopimelate desuccinylase of Aliivibrio fischeri (strain MJ11) (Vibrio fischeri).